A 399-amino-acid chain; its full sequence is Subtilisin-like protease 4 (399 aa).

The first 19 residues, Met1–Ala19, serve as a signal peptide directing secretion. A propeptide spanning residues Arg20–Ser118 is cleaved from the precursor. The 80-residue stretch at Tyr38 to Ile117 folds into the Inhibitor I9 domain. A glycan (N-linked (GlcNAc...) asparagine) is linked at Asn102. Residues Ser128 to Gln399 form the Peptidase S8 domain. Catalysis depends on charge relay system residues Asp160 and His191. Residues Asn252 and Asn308 are each glycosylated (N-linked (GlcNAc...) asparagine). Ser346 acts as the Charge relay system in catalysis. N-linked (GlcNAc...) asparagine glycosylation is present at Asn395.

This sequence belongs to the peptidase S8 family.

It localises to the secreted. In terms of biological role, secreted subtilisin-like serine protease with keratinolytic activity that contributes to pathogenicity. This Trichophyton tonsurans (Scalp ringworm fungus) protein is Subtilisin-like protease 4 (SUB4).